A 101-amino-acid chain; its full sequence is Cell division protein FtsB (101 aa).

At M1 to I3 the chain is on the cytoplasmic side. Residues V4–L21 traverse the membrane as a helical segment. Topologically, residues G22 to Q101 are periplasmic. A coiled-coil region spans residues E33–L53.

Belongs to the FtsB family. In terms of assembly, part of a complex composed of FtsB, FtsL and FtsQ.

It is found in the cell inner membrane. Essential cell division protein. May link together the upstream cell division proteins, which are predominantly cytoplasmic, with the downstream cell division proteins, which are predominantly periplasmic. This chain is Cell division protein FtsB, found in Polynucleobacter necessarius subsp. necessarius (strain STIR1).